Consider the following 432-residue polypeptide: 3-phosphoshikimate 1-carboxyvinyltransferase (432 aa).

Residues K23, S24, and R28 each contribute to the 3-phosphoshikimate site. K23 contacts phosphoenolpyruvate. Positions 95 and 123 each coordinate phosphoenolpyruvate. Positions 167, 169, 317, and 344 each coordinate 3-phosphoshikimate. Residue Q169 coordinates phosphoenolpyruvate. The Proton acceptor role is filled by D317. Residues R348 and R390 each contribute to the phosphoenolpyruvate site.

It belongs to the EPSP synthase family. Monomer.

It localises to the cytoplasm. The catalysed reaction is 3-phosphoshikimate + phosphoenolpyruvate = 5-O-(1-carboxyvinyl)-3-phosphoshikimate + phosphate. Its pathway is metabolic intermediate biosynthesis; chorismate biosynthesis; chorismate from D-erythrose 4-phosphate and phosphoenolpyruvate: step 6/7. Catalyzes the transfer of the enolpyruvyl moiety of phosphoenolpyruvate (PEP) to the 5-hydroxyl of shikimate-3-phosphate (S3P) to produce enolpyruvyl shikimate-3-phosphate and inorganic phosphate. This Staphylococcus haemolyticus (strain JCSC1435) protein is 3-phosphoshikimate 1-carboxyvinyltransferase.